The sequence spans 448 residues: MREIVYLQTGQCGNQIGAAFWQTISGEHGLDGSGVYNGSSDLQLERMNVYFNEASGNKYVPRAVLVDLEPGTMDAVRAGPFGQLFRPDNFVFGQSGAGNNWAKGHYTEGAELVDQVVDVVRREAEGCDCLQGFQITHSLGGGTGAGMGTLLISKIREEFPDRMMATFSVMPSPKVSDTVVEPYNATLSVHQLVEHSDETFCIDNEALYDICMRTLKLSNPSYGDLNHLVSAVMSGVTTCLRFPGQLNSDLRKLAVNMVPFPRLHFFMVGFAPLTSRGAHSFRAVSVPELTQQMFDPKNMMAASDFRNGRYLTCSAIFRGKVSMKEVEDQMRNIQSKNQTYFVEWIPNNIQTALCSIPPRGLKMSSTFIGNSTSIQELFKRVGDQFTAMFRRKAFLHWYTGEGMDEMEFTEAESNMNDLVSEYQQYQDASISEGEEEYLEEEEPLEHEE.

The GTP site is built by glutamine 11, glutamate 69, serine 138, glycine 142, threonine 143, glycine 144, asparagine 204, and asparagine 226. Glutamate 69 provides a ligand contact to Mg(2+). Residues 425–448 (YQDASISEGEEEYLEEEEPLEHEE) are disordered. The span at 432–448 (EGEEEYLEEEEPLEHEE) shows a compositional bias: acidic residues.

Belongs to the tubulin family. In terms of assembly, dimer of alpha and beta chains. A typical microtubule is a hollow water-filled tube with an outer diameter of 25 nm and an inner diameter of 15 nM. Alpha-beta heterodimers associate head-to-tail to form protofilaments running lengthwise along the microtubule wall with the beta-tubulin subunit facing the microtubule plus end conferring a structural polarity. Microtubules usually have 13 protofilaments but different protofilament numbers can be found in some organisms and specialized cells. The cofactor is Mg(2+).

The protein resides in the cytoplasm. It is found in the cytoskeleton. Its function is as follows. Tubulin is the major constituent of microtubules, a cylinder consisting of laterally associated linear protofilaments composed of alpha- and beta-tubulin heterodimers. Microtubules grow by the addition of GTP-tubulin dimers to the microtubule end, where a stabilizing cap forms. Below the cap, tubulin dimers are in GDP-bound state, owing to GTPase activity of alpha-tubulin. The polypeptide is Tubulin beta chain (benR) (Aspergillus parasiticus).